A 264-amino-acid polypeptide reads, in one-letter code: MIVKTRAVVLREIKYRDQSKILTLYTREFGRLACILKGGRNPKNRLSGIFSAGNVLDIVLYRKPEREVQLISDGSLVSCPMVPGPDIERFGVLYRIIDLVRLTTEHDGRSPRLFSLLESTLLELNRERVAYRTLYAWFLLRFISLQGFAPELCRCVFSGREIAADAAGGPRGELLFVMNPGGLALPGTACTDGRNVRPILPEAADLLAALSRTSTAESAAGGSGIPEGSAALFCGTLLQEYCRHHLEHTGGQKNLAVISQLLAE.

Belongs to the RecO family.

Involved in DNA repair and RecF pathway recombination. This chain is DNA repair protein RecO, found in Chlorobium luteolum (strain DSM 273 / BCRC 81028 / 2530) (Pelodictyon luteolum).